Consider the following 222-residue polypeptide: Pyrrolidone-carboxylate peptidase (222 aa).

Catalysis depends on residues glutamate 80, cysteine 146, and histidine 170.

This sequence belongs to the peptidase C15 family. In terms of assembly, homotetramer.

The protein localises to the cytoplasm. It catalyses the reaction Release of an N-terminal pyroglutamyl group from a polypeptide, the second amino acid generally not being Pro.. In terms of biological role, removes 5-oxoproline from various penultimate amino acid residues except L-proline. The protein is Pyrrolidone-carboxylate peptidase of Mycobacterium tuberculosis (strain ATCC 25177 / H37Ra).